A 567-amino-acid polypeptide reads, in one-letter code: Urease subunit alpha (567 aa).

Residues 129 to 567 (GGVDSHIHFI…LPLAQRYFLF (439 aa)) form the Urease domain. Ni(2+)-binding residues include histidine 134, histidine 136, and lysine 217. Position 217 is an N6-carboxylysine (lysine 217). Histidine 219 contacts substrate. Ni(2+) is bound by residues histidine 246 and histidine 272. Histidine 320 serves as the catalytic Proton donor. Residue aspartate 360 participates in Ni(2+) binding.

It belongs to the metallo-dependent hydrolases superfamily. Urease alpha subunit family. Heterotrimer of UreA (gamma), UreB (beta) and UreC (alpha) subunits. Three heterotrimers associate to form the active enzyme. The cofactor is Ni cation. Carboxylation allows a single lysine to coordinate two nickel ions.

It is found in the cytoplasm. It carries out the reaction urea + 2 H2O + H(+) = hydrogencarbonate + 2 NH4(+). It functions in the pathway nitrogen metabolism; urea degradation; CO(2) and NH(3) from urea (urease route): step 1/1. The polypeptide is Urease subunit alpha (Pseudomonas putida (strain ATCC 47054 / DSM 6125 / CFBP 8728 / NCIMB 11950 / KT2440)).